Consider the following 1577-residue polypeptide: Dynamin-binding protein (1577 aa).

Residue Met1 is modified to N-acetylmethionine. 3 SH3 domains span residues 2 to 61 (EPGS…IVTI), 66 to 126 (EGER…ELCL), and 145 to 204 (YSMG…LLGP). Positions 209–242 (DESVNAGSGDDSTLNDEVDVSPEEVESEGDEDDQ) are disordered. The segment covering 221-242 (TLNDEVDVSPEEVESEGDEDDQ) has biased composition (acidic residues). Positions 243–302 (QAGTYGIALYRFQALESNELDFEVGDKIRILGTLEDGWLEGRLKGKTGIFPHRFVKLCPS) constitute an SH3 4 domain. Disordered stretches follow at residues 307 to 361 (ETMA…EEPL) and 375 to 437 (GQDE…SRQC). The span at 400 to 410 (PDLSQEVNGIS) shows a compositional bias: polar residues. Ser494 carries the phosphoserine modification. Disordered stretches follow at residues 519-547 (PERP…DNLD) and 590-681 (RGSS…SEYT). Residues 617 to 626 (TPTSTSPHLL) are compositionally biased toward low complexity. Over residues 632–651 (KPGPPLVVRPSRPAPLPPPT) the composition is skewed to pro residues. Residues 652-662 (QQRLNTASPKP) are compositionally biased toward polar residues. The segment covering 672–681 (APEKEGSEYT) has biased composition (basic and acidic residues). A Phosphoserine modification is found at Ser684. A coiled-coil region spans residues 705–755 (LDMHTRAQEELNLLLEEKQDESLRAETLETLKSYESTIQSLNLELQQLREM). Residues 784–967 (KRAKVVAELL…KEINANINEY (184 aa)) enclose the DH domain. One can recognise a BAR domain in the interval 1008–1217 (LKHLTGFAPQ…LKASDREGNL (210 aa)). One can recognise an SH3 5 domain in the interval 1285-1348 (PPEKLFHVQR…YSSFLKPYNP (64 aa)). Residues 1353–1375 (SDSSVVSHSSTESEHSGSSPSFH) show a composition bias toward low complexity. Disordered stretches follow at residues 1353–1381 (SDSS…NSSS) and 1415–1510 (ETLG…LGSS). Polar residues-rich tracts occupy residues 1418 to 1428 (GVSSNTGNPET) and 1484 to 1497 (DQGS…SRAC). An SH3 6 domain is found at 1513 to 1576 (EGNQVYFAIY…PSNYIRKTEY (64 aa)).

As to quaternary structure, binds DNM1 via its N-terminal SH3 domains. The C-terminal SH3 domain binds a complex containing actin, tubulin, Hsp70 and actin-regulatory proteins, such as ENAH, EVL, WIRE, CR16, WAVE1 and NAP1L1. Interacts with FASLG. Interacts (via SH3 domain 6) with WASL. Interacts (via SH3 domain 6) interacts with ENAH. Interacts (via C-terminal domain) with TJP1; required for the apical cell-cell junction localization of DNMBP. In terms of tissue distribution, widely expressed.

It is found in the cytoplasm. The protein resides in the golgi apparatus. The protein localises to the golgi stack. It localises to the cytoskeleton. Its subcellular location is the synapse. It is found in the cell junction. Functionally, plays a critical role as a guanine nucleotide exchange factor (GEF) for CDC42 in several intracellular processes associated with the actin and microtubule cytoskeleton. Regulates the structure of apical junctions in epithelial cells. Participates in the normal lumenogenesis of epithelial cell cysts by regulating spindle orientation. Plays a role in ciliogenesis. May play a role in membrane trafficking between the cell surface and the Golgi. The polypeptide is Dynamin-binding protein (Rattus norvegicus (Rat)).